A 608-amino-acid chain; its full sequence is Nuclear protein localization protein 4 homolog (608 aa).

N-acetylalanine is present on Ala-2. Lys-179 bears the N6-acetyllysine mark. Residues 226 to 363 (IMFENHTVAD…MCRLSPDGHF (138 aa)) enclose the MPN domain. The RanBP2-type zinc finger occupies 580–608 (TAAMWACQHCTFMNQPGTGHCEMCSLPRT).

This sequence belongs to the NPL4 family. In terms of assembly, heterodimer with UFD1. The heterodimer binds ubiquitinated proteins. The heterodimer binds to VCP and inhibits Golgi membrane fusion. Interacts with ZFAND2B; probably through VCP. Expressed at highest levels in brain, heart, skeletal muscle, kidney and fetal liver.

Its subcellular location is the cytoplasm. It localises to the cytosol. It is found in the endoplasmic reticulum. The protein localises to the nucleus. It participates in protein degradation; proteasomal ubiquitin-dependent pathway. In terms of biological role, the ternary complex containing UFD1, VCP and NPLOC4 binds ubiquitinated proteins and is necessary for the export of misfolded proteins from the ER to the cytoplasm, where they are degraded by the proteasome. The NPLOC4-UFD1-VCP complex regulates spindle disassembly at the end of mitosis and is necessary for the formation of a closed nuclear envelope. Acts as a negative regulator of type I interferon production via the complex formed with VCP and UFD1, which binds to RIGI and recruits RNF125 to promote ubiquitination and degradation of RIGI. The sequence is that of Nuclear protein localization protein 4 homolog (NPLOC4) from Homo sapiens (Human).